The sequence spans 308 residues: Ribosomal protein L11 methyltransferase (308 aa).

S-adenosyl-L-methionine is bound by residues Thr148, Gly169, Asp191, and Asn239.

Belongs to the methyltransferase superfamily. PrmA family.

The protein localises to the cytoplasm. It catalyses the reaction L-lysyl-[protein] + 3 S-adenosyl-L-methionine = N(6),N(6),N(6)-trimethyl-L-lysyl-[protein] + 3 S-adenosyl-L-homocysteine + 3 H(+). Methylates ribosomal protein L11. This Psychrobacter arcticus (strain DSM 17307 / VKM B-2377 / 273-4) protein is Ribosomal protein L11 methyltransferase.